We begin with the raw amino-acid sequence, 822 residues long: Dimethyl sulfoxide/trimethylamine N-oxide reductase (822 aa).

Residues 1-42 constitute a signal peptide (tat-type signal); the sequence is MTKLSGQELHAELSRRAFLSYTAAVGALGLCGTSLLAQGARA. Residues tryptophan 158, 158-160, serine 189, 232-233, 262-263, 283-285, 364-365, arginine 368, asparagine 476, histidine 480, 500-501, arginine 523, aspartate 553, 683-686, arginine 689, 691-693, asparagine 779, and 796-797 contribute to the Mo-bis(molybdopterin guanine dinucleotide) site; these read WKS, KT, IN, QTD, WS, QD, ASHP, HSQ, and GQ.

This sequence belongs to the prokaryotic molybdopterin-containing oxidoreductase family. Homodimer. Mo-bis(molybdopterin guanine dinucleotide) serves as cofactor. Predicted to be exported by the Tat system. The position of the signal peptide cleavage has been experimentally proven.

The protein resides in the periplasm. It carries out the reaction dimethyl sulfide + a menaquinone + H2O = dimethyl sulfoxide + a menaquinol. It catalyses the reaction trimethylamine + 2 Fe(III)-[cytochrome c] + H2O = trimethylamine N-oxide + 2 Fe(II)-[cytochrome c] + 3 H(+). In terms of biological role, catalyzes the reduction of dimethyl sulfoxide (DMSO) and trimethylamine N-oxide (TMAO) to dimethyl sulfide (DMS) and trimethylamine, respectively. The terminal DMSO reductase can also use various sulfoxides and N-oxide compounds as terminal electron acceptor in addition to DMSO and TMAO. The sequence is that of Dimethyl sulfoxide/trimethylamine N-oxide reductase (dmsA) from Cereibacter sphaeroides (Rhodobacter sphaeroides).